The primary structure comprises 317 residues: Beta-ketoacyl-[acyl-carrier-protein] synthase III (317 aa).

Catalysis depends on residues Cys112 and His244. The interval Gln245–Arg249 is ACP-binding. Asn274 is a catalytic residue.

Belongs to the thiolase-like superfamily. FabH family. As to quaternary structure, homodimer.

The protein resides in the cytoplasm. The catalysed reaction is malonyl-[ACP] + acetyl-CoA + H(+) = 3-oxobutanoyl-[ACP] + CO2 + CoA. The protein operates within lipid metabolism; fatty acid biosynthesis. Functionally, catalyzes the condensation reaction of fatty acid synthesis by the addition to an acyl acceptor of two carbons from malonyl-ACP. Catalyzes the first condensation reaction which initiates fatty acid synthesis and may therefore play a role in governing the total rate of fatty acid production. Possesses both acetoacetyl-ACP synthase and acetyl transacylase activities. Its substrate specificity determines the biosynthesis of branched-chain and/or straight-chain of fatty acids. This is Beta-ketoacyl-[acyl-carrier-protein] synthase III from Shigella dysenteriae serotype 1 (strain Sd197).